The following is an 85-amino-acid chain: RNA-binding protein Hfq (85 aa).

In terms of domain architecture, Sm spans 9-69 (DQLLNTARKD…ISTIIPAKII (61 aa)).

The protein belongs to the Hfq family. As to quaternary structure, homohexamer.

RNA chaperone that binds small regulatory RNA (sRNAs) and mRNAs to facilitate mRNA translational regulation in response to envelope stress, environmental stress and changes in metabolite concentrations. Also binds with high specificity to tRNAs. The sequence is that of RNA-binding protein Hfq from Leptospira interrogans serogroup Icterohaemorrhagiae serovar copenhageni (strain Fiocruz L1-130).